The chain runs to 462 residues: 3-isopropylmalate dehydratase large subunit (462 aa).

Positions 337, 397, and 400 each coordinate [4Fe-4S] cluster.

This sequence belongs to the aconitase/IPM isomerase family. LeuC type 1 subfamily. In terms of assembly, heterodimer of LeuC and LeuD. Requires [4Fe-4S] cluster as cofactor.

The catalysed reaction is (2R,3S)-3-isopropylmalate = (2S)-2-isopropylmalate. It functions in the pathway amino-acid biosynthesis; L-leucine biosynthesis; L-leucine from 3-methyl-2-oxobutanoate: step 2/4. In terms of biological role, catalyzes the isomerization between 2-isopropylmalate and 3-isopropylmalate, via the formation of 2-isopropylmaleate. The chain is 3-isopropylmalate dehydratase large subunit from Listeria monocytogenes serovar 1/2a (strain ATCC BAA-679 / EGD-e).